Reading from the N-terminus, the 322-residue chain is MTGTARSALPLPQSPARALRPSGAARAAPSLSPSRFSACPLDPSSFPTSGNKMFIGGLSWDTSKKDLTEYLSRFGEVVDCTIKTDPVTGRSRGFGFVLFKDAASVDKVLELKEHKLDGKLIDPKRAKALKGKEPPKKVFVGGLSPDTSEEQIKEYFGAFGEIENIELPMDTKTNERRGFCFITYTDEEPVKKLLESRYHQIGSGKCEIKVAQPKEVYRQQQQQQKGGRGAAAGGRGGARGRGRGQGQNWNQGFNNYYDQGYGNYNSAYGDESYSGYGGYDYTGYNYGSYGYGQGYTDYSGQQSTYGKASRGGGNHQNNYQPY.

The disordered stretch occupies residues 1–36 (MTGTARSALPLPQSPARALRPSGAARAAPSLSPSRF). At Arg-6 the chain carries Omega-N-methylarginine. Low complexity predominate over residues 14–36 (SPARALRPSGAARAAPSLSPSRF). 2 RRM domains span residues 51–133 (NKMF…KGKE) and 136–215 (KKVF…QPKE). Lys-64 bears the N6-methyllysine mark. Residue Lys-112 forms a Glycyl lysine isopeptide (Lys-Gly) (interchain with G-Cter in SUMO2) linkage. Lys-119 is subject to N6-acetyllysine. The residue at position 144 (Ser-144) is a Phosphoserine. 2 disordered regions span residues 216–251 (VYRQ…NWNQ) and 299–322 (SGQQ…YQPY). The segment covering 226–245 (GGRGAAAGGRGGARGRGRGQ) has biased composition (gly residues). Residues 245–322 (QGQNWNQGFN…GNHQNNYQPY (78 aa)) form a necessary for interaction with TNPO1 region. A Dimethylated arginine; alternate modification is found at Arg-310. Position 310 is an omega-N-methylarginine; alternate (Arg-310).

Interacts with TNPO1 and ZNF148. Dimethylation of Arg-310 is probably of the asymmetric type.

The protein localises to the nucleus. It is found in the cytoplasm. Its function is as follows. Acts as a transcriptional regulator. Promotes transcription repression. Promotes transcription activation in differentiated myotubes. Binds to double- and single-stranded DNA sequences. Binds to the transcription suppressor CATR sequence of the COX5B promoter. Binds with high affinity to RNA molecules that contain AU-rich elements (AREs) found within the 3'-UTR of many proto-oncogenes and cytokine mRNAs. Binds both to nuclear and cytoplasmic poly(A) mRNAs. Binds to poly(G) and poly(A), but not to poly(U) or poly(C) RNA homopolymers. Binds to the 5'-ACUAGC-3' RNA consensus sequence. In Rattus norvegicus (Rat), this protein is Heterogeneous nuclear ribonucleoprotein D-like (Hnrnpdl).